Reading from the N-terminus, the 231-residue chain is Acyl-protein thioesterase 1 (231 aa).

Catalysis depends on charge relay system residues Ser-121, Asp-178, and His-211.

Belongs to the AB hydrolase superfamily. AB hydrolase 2 family.

The protein resides in the cytoplasm. The protein localises to the nucleus. It catalyses the reaction S-hexadecanoyl-L-cysteinyl-[protein] + H2O = L-cysteinyl-[protein] + hexadecanoate + H(+). Hydrolyzes fatty acids from S-acylated cysteine residues in proteins with a strong preference for palmitoylated G-alpha proteins over other acyl substrates. Mediates the deacylation of G-alpha proteins such as GPA1 in vivo, but has weak or no activity toward palmitoylated Ras proteins. Has weak lysophospholipase activity in vitro; however such activity may not exist in vivo. This is Acyl-protein thioesterase 1 from Candida albicans (strain SC5314 / ATCC MYA-2876) (Yeast).